The chain runs to 408 residues: Innexin-12 (408 aa).

A helical membrane pass occupies residues 29 to 49 (TIGLVLASAFITGWSFVGSPI). The N-linked (GlcNAc...) asparagine glycan is linked to N99. Helical transmembrane passes span 113-133 (QWVP…VVIW), 197-217 (VITS…FQFV), and 284-304 (IFVA…TNTI).

It belongs to the pannexin family.

The protein localises to the cell membrane. Its subcellular location is the cell junction. It is found in the gap junction. Functionally, structural component of the gap junctions. Plays a role in oocyte directional transit in the spermatheca during ovulation by facilitating the directional propagation of the calcium signal in the spermatheca. Plays a role in male tail tip morphogenesis. In Caenorhabditis elegans, this protein is Innexin-12.